The chain runs to 56 residues: MDRILLEILACPICKGKLVYSQDEQELICRFDKLAYPIHDGIPVMLPDSTRPLIER.

This sequence belongs to the UPF0434 family.

The chain is UPF0434 protein CBUD_1597.1 from Coxiella burnetii (strain Dugway 5J108-111).